A 272-amino-acid polypeptide reads, in one-letter code: 3-deoxy-manno-octulosonate cytidylyltransferase (272 aa).

This sequence belongs to the KdsB family.

The protein localises to the cytoplasm. It carries out the reaction 3-deoxy-alpha-D-manno-oct-2-ulosonate + CTP = CMP-3-deoxy-beta-D-manno-octulosonate + diphosphate. Its pathway is nucleotide-sugar biosynthesis; CMP-3-deoxy-D-manno-octulosonate biosynthesis; CMP-3-deoxy-D-manno-octulosonate from 3-deoxy-D-manno-octulosonate and CTP: step 1/1. The protein operates within bacterial outer membrane biogenesis; lipopolysaccharide biosynthesis. Its function is as follows. Activates KDO (a required 8-carbon sugar) for incorporation into bacterial lipopolysaccharide in Gram-negative bacteria. This chain is 3-deoxy-manno-octulosonate cytidylyltransferase, found in Verminephrobacter eiseniae (strain EF01-2).